The chain runs to 1035 residues: Glycine dehydrogenase (decarboxylating), mitochondrial (1035 aa).

The transit peptide at 1–64 (MERARKLANR…KSFNTQQARS (64 aa)) directs the protein to the mitochondrion. K771 carries the post-translational modification N6-(pyridoxal phosphate)lysine.

It belongs to the GcvP family. Homodimer. The glycine cleavage system is composed of four proteins: P, T, L and H. The cofactor is pyridoxal 5'-phosphate.

It is found in the mitochondrion. The catalysed reaction is N(6)-[(R)-lipoyl]-L-lysyl-[glycine-cleavage complex H protein] + glycine + H(+) = N(6)-[(R)-S(8)-aminomethyldihydrolipoyl]-L-lysyl-[glycine-cleavage complex H protein] + CO2. Functionally, the glycine cleavage system catalyzes the degradation of glycine. The P protein binds the alpha-amino group of glycine through its pyridoxal phosphate cofactor; CO(2) is released and the remaining methylamine moiety is then transferred to the lipoamide cofactor of the H protein. This Solanum tuberosum (Potato) protein is Glycine dehydrogenase (decarboxylating), mitochondrial (GDCSP).